Reading from the N-terminus, the 104-residue chain is Large ribosomal subunit protein uL24 (104 aa).

It belongs to the universal ribosomal protein uL24 family. Part of the 50S ribosomal subunit.

Functionally, one of two assembly initiator proteins, it binds directly to the 5'-end of the 23S rRNA, where it nucleates assembly of the 50S subunit. One of the proteins that surrounds the polypeptide exit tunnel on the outside of the subunit. The sequence is that of Large ribosomal subunit protein uL24 from Pseudomonas aeruginosa (strain LESB58).